A 375-amino-acid polypeptide reads, in one-letter code: Succinyl-diaminopimelate desuccinylase (375 aa).

Position 66 (H66) interacts with Zn(2+). Residue D68 is part of the active site. A Zn(2+)-binding site is contributed by D99. Catalysis depends on E133, which acts as the Proton acceptor. E134, E162, and H348 together coordinate Zn(2+).

This sequence belongs to the peptidase M20A family. DapE subfamily. As to quaternary structure, homodimer. Zn(2+) is required as a cofactor. It depends on Co(2+) as a cofactor.

The enzyme catalyses N-succinyl-(2S,6S)-2,6-diaminopimelate + H2O = (2S,6S)-2,6-diaminopimelate + succinate. Its pathway is amino-acid biosynthesis; L-lysine biosynthesis via DAP pathway; LL-2,6-diaminopimelate from (S)-tetrahydrodipicolinate (succinylase route): step 3/3. In terms of biological role, catalyzes the hydrolysis of N-succinyl-L,L-diaminopimelic acid (SDAP), forming succinate and LL-2,6-diaminopimelate (DAP), an intermediate involved in the bacterial biosynthesis of lysine and meso-diaminopimelic acid, an essential component of bacterial cell walls. This chain is Succinyl-diaminopimelate desuccinylase, found in Salmonella typhi.